A 185-amino-acid polypeptide reads, in one-letter code: Capsid protein (185 aa).

A disordered region spans residues 135 to 185; the sequence is PNAPILSTLPETTVVRRRDRGRSPRRRTPSPRRRRSQSPRRRRSQSRESQC. A compositionally biased stretch (basic residues) spans 149–178; that stretch reads VRRRDRGRSPRRRTPSPRRRRSQSPRRRRS. Residues serine 157, serine 164, and serine 172 each carry the phosphoserine; by host modification. The stretch at 157-163 is one 1; half-length repeat; the sequence is SPRRRTP. A 3 X 8 AA repeats of S-P-R-R-R-[PR]-S-Q region spans residues 157–179; the sequence is SPRRRTPSPRRRRSQSPRRRRSQ. The Bipartite nuclear localization signal signature appears at 160–177; the sequence is RRTPSPRRRRSQSPRRRR. A run of 2 repeats spans residues 164 to 171 and 172 to 179. The segment at 179-185 is RNA binding; that stretch reads QSRESQC.

It belongs to the orthohepadnavirus core antigen family. In terms of assembly, homodimerizes, then multimerizes. Interacts with cytosol exposed regions of viral L glycoprotein present in the reticulum-to-Golgi compartment. Interacts with human FLNB. Phosphorylated form interacts with host importin alpha; this interaction depends on the exposure of the NLS, which itself depends upon genome maturation and/or phosphorylation of the capsid protein. Interacts with host NUP153. Phosphorylated by host SRPK1, SRPK2, and maybe protein kinase C or GAPDH. Phosphorylation is critical for pregenomic RNA packaging. Protein kinase C phosphorylation is stimulated by HBx protein and may play a role in transport of the viral genome to the nucleus at the late step during the viral replication cycle.

It localises to the virion. Its subcellular location is the host cytoplasm. Its function is as follows. Self assembles to form an icosahedral capsid. Most capsids appear to be large particles with an icosahedral symmetry of T=4 and consist of 240 copies of capsid protein, though a fraction forms smaller T=3 particles consisting of 180 capsid proteins. Entering capsids are transported along microtubules to the nucleus. Phosphorylation of the capsid is thought to induce exposure of nuclear localization signal in the C-terminal portion of the capsid protein that allows binding to the nuclear pore complex via the importin (karyopherin-) alpha and beta. Capsids are imported in intact form through the nuclear pore into the nuclear basket, where it probably binds NUP153. Only capsids that contain the mature viral genome can release the viral DNA and capsid protein into the nucleoplasm. Immature capsids get stuck in the basket. Capsids encapsulate the pre-genomic RNA and the P protein. Pre-genomic RNA is reverse-transcribed into DNA while the capsid is still in the cytoplasm. The capsid can then either be directed to the nucleus, providing more genomes for transcription, or bud through the endoplasmic reticulum to provide new virions. The protein is Capsid protein of Hepatitis B virus genotype A3 (isolate Cameroon/CMR711/1994) (HBV-A).